Consider the following 873-residue polypeptide: MDIAKWVEHARTCYSTQLDTKIKVIGVIGKDYPDHGKGDNINCYLRENVFPVAATEDETCTIRGHFSEDDQILFLVMNGVDDVANIRKCLKSNPKSNYFDAMAESECQQIRMLHFLFISCHFIIIFEQTSRIDLELMRFLKKVNSARIQLRKKINQRLVASDLRDVSFNNRILSSAESEGRMVVPRLLIAFQRNNIRPDVNPGKKLQRELYEKLEKNLDNQFSDILKLYDLIDCGASSLCQLNETIPVVHLLNPKIVKRDIIGEMFEILMADAENTKISGNAGTLPSNNSFVKFLEDNFRSEKNEISLENVIELMNCLQCVLDGDLEEKHEKTAIQTFIKRIQNDHMEEARRLYTNAQRPGERRGADRFKDSEKPVKIRSKEEHLMRFNEATHYIDSVVGVNSREALSQLQAQCNEMWQSDMRACESVSMMGRSCVRKIHPTFGDQTAPEHRWTAHDASNTMISTCVCGRKQLIRPEPFSVKEANSDFYDHPDFKCCRRLWRYQFQLYQEDSEEKDDIMWADRESNSLRAAKKMAQREDELAEEDTDLDIPESLLDPDSTSPSDEDDVRVRTMSSSESSSQESDAYLRPTSRRDESMASKTERELTIDHVKRMQKLELAGKSEDFLITVPNSMTTGKLPIFPSWHLTSLGDSSIYSHGAGLKNQPNFKIGGDYLSPVVVLLDVNFDVWNRDLNKIRSEDFSRKCGKDNKDDSARVKLFVGFEYECSRGHRFFVDYNGEPLIYSKGSNVIRESAHRSSLGNVLQADLPIRRPCTCRKLPLQSAQLQKVHVVTPKAPVHITIDPKVLIPTHEGVYGTGQEPLELHHSKYYILHLPTVYSGPSGAWMPGEFNPEKQGVWMGGALKVAYKPVMSFKW.

Residues 531–604 (AKKMAQREDE…ESMASKTERE (74 aa)) form a disordered region. Acidic residues predominate over residues 540–550 (ELAEEDTDLDI). 2 stretches are compositionally biased toward low complexity: residues 551–562 (PESLLDPDSTSP) and 574–583 (SSSESSSQES). Residues 591–604 (SRRDESMASKTERE) are compositionally biased toward basic and acidic residues.

This sequence belongs to the SMG8 family.

Its function is as follows. Involved in nonsense-mediated decay (NMD) of mRNAs containing premature stop codons. Probable component of kinase complex containing smg-1 and recruited to stalled ribosomes. The sequence is that of Nonsense-mediated mRNA decay factor SMG8 (smg-8) from Caenorhabditis elegans.